We begin with the raw amino-acid sequence, 185 residues long: Large ribosomal subunit protein uL22 (185 aa).

Belongs to the universal ribosomal protein uL22 family.

This Debaryomyces hansenii (strain ATCC 36239 / CBS 767 / BCRC 21394 / JCM 1990 / NBRC 0083 / IGC 2968) (Yeast) protein is Large ribosomal subunit protein uL22 (RPL17).